A 117-amino-acid chain; its full sequence is Large ribosomal subunit protein bL20c (117 aa).

This sequence belongs to the bacterial ribosomal protein bL20 family.

It is found in the plastid. Its subcellular location is the chloroplast. In terms of biological role, binds directly to 23S ribosomal RNA and is necessary for the in vitro assembly process of the 50S ribosomal subunit. It is not involved in the protein synthesizing functions of that subunit. In Chloranthus spicatus (Chulantree), this protein is Large ribosomal subunit protein bL20c.